Reading from the N-terminus, the 242-residue chain is UPF0246 protein SP_1547 (242 aa).

It belongs to the UPF0246 family.

In Streptococcus pneumoniae serotype 4 (strain ATCC BAA-334 / TIGR4), this protein is UPF0246 protein SP_1547.